A 357-amino-acid chain; its full sequence is 3-isopropylmalate dehydrogenase (357 aa).

G76–E89 serves as a coordination point for NAD(+). Substrate-binding residues include R96, R106, R134, and D224. Mg(2+) is bound by residues D224, D248, and D252. Residue G282–N294 coordinates NAD(+).

The protein belongs to the isocitrate and isopropylmalate dehydrogenases family. LeuB type 1 subfamily. In terms of assembly, homodimer. Requires Mg(2+) as cofactor. The cofactor is Mn(2+).

It is found in the cytoplasm. The catalysed reaction is (2R,3S)-3-isopropylmalate + NAD(+) = 4-methyl-2-oxopentanoate + CO2 + NADH. It functions in the pathway amino-acid biosynthesis; L-leucine biosynthesis; L-leucine from 3-methyl-2-oxobutanoate: step 3/4. Catalyzes the oxidation of 3-carboxy-2-hydroxy-4-methylpentanoate (3-isopropylmalate) to 3-carboxy-4-methyl-2-oxopentanoate. The product decarboxylates to 4-methyl-2 oxopentanoate. In Hydrogenovibrio crunogenus (strain DSM 25203 / XCL-2) (Thiomicrospira crunogena), this protein is 3-isopropylmalate dehydrogenase.